Reading from the N-terminus, the 133-residue chain is Profilin (133 aa).

It belongs to the profilin family. Interacts with host TPM1. Interacts with protein A25.

The protein resides in the host cytoplasm. Functionally, participates in either intracellular transport of viral proteins or intercellular spread of the virus. Cellular profilins modulate actin filament dynamics (polymerization and depolymerization) via direct binding to actin through an actin-binding domain as well as by modulation of other actin-binding proteins. In contrast to cellular homologs, the poxvirus profilins seem to bind actin only weakly. The polypeptide is Profilin (OPG171) (Variola virus (isolate Human/India/Ind3/1967) (VARV)).